A 351-amino-acid polypeptide reads, in one-letter code: GTPase Obg (351 aa).

The region spanning 1 to 159 (MKFLDQCKIY…RWVWLRLKLI (159 aa)) is the Obg domain. The OBG-type G domain occupies 160–327 (ADAGLVGLPN…MLFELLRHIR (168 aa)). Residues 166–173 (GLPNAGKS), 191–195 (FTTLT), 212–215 (DIPG), 279–282 (NKID), and 308–310 (SGA) each bind GTP. Residues S173 and T193 each contribute to the Mg(2+) site.

It belongs to the TRAFAC class OBG-HflX-like GTPase superfamily. OBG GTPase family. As to quaternary structure, monomer. The cofactor is Mg(2+).

It localises to the cytoplasm. An essential GTPase which binds GTP, GDP and possibly (p)ppGpp with moderate affinity, with high nucleotide exchange rates and a fairly low GTP hydrolysis rate. Plays a role in control of the cell cycle, stress response, ribosome biogenesis and in those bacteria that undergo differentiation, in morphogenesis control. The chain is GTPase Obg from Rhodospirillum centenum (strain ATCC 51521 / SW).